The chain runs to 432 residues: CLOCK-interacting pacemaker (432 aa).

Disordered regions lie at residues 71 to 98 (ADSD…SEDM) and 194 to 315 (SYTK…SSPL). Phosphoserine is present on S246. The segment covering 272-283 (SPQTLQPVSSSH) has biased composition (polar residues). Residues 364 to 395 (EITLKTKELIRQNQATQAELDQLKEQTQMFIE) are a coiled coil. The interval 408–432 (LQASLTSGSSHSGSDLDTLSDHPDV) is disordered. The span at 411-424 (SLTSGSSHSGSDLD) shows a compositional bias: low complexity.

As to quaternary structure, interacts with CLOCK. Forms a ternary complex with the CLOCK-BMAL1 heterodimer. Interacts with CAD and HSPA5. In terms of tissue distribution, expressed in the heart, kidney and liver and shows a circadian oscillation in these tissues with a peak at circadian time 14 hours (at protein level). Expressed in the brain, including the suprachiasmatic nucleus (SCN) of the brain, and in multiple peripheral tissues such as heart, liver and kidney. Exhibits a circadian oscillation in the peripheral tissues with a peak at circadian time 14 hours.

It localises to the nucleus. The protein localises to the cytoplasm. Its subcellular location is the cytosol. Its function is as follows. Transcriptional repressor which may act as a negative-feedback regulator of CLOCK-BMAL1 transcriptional activity in the circadian-clock mechanism. May stimulate BMAL1-dependent phosphorylation of CLOCK. However, the physiological relevance of these observations is unsure, since experiments in knockout mice showed that CIPC is not critially required for basic circadian clock. In Mus musculus (Mouse), this protein is CLOCK-interacting pacemaker (Cipc).